A 336-amino-acid chain; its full sequence is tRNA-cytidine(32) 2-sulfurtransferase (336 aa).

Residues 11–23 (TAAAPAGTGEATP) show a composition bias toward low complexity. The disordered stretch occupies residues 11 to 31 (TAAAPAGTGEATPVHARARSP). The short motif at 75-80 (SGGKDS) is the PP-loop motif element. [4Fe-4S] cluster-binding residues include cysteine 150, cysteine 153, and cysteine 241.

The protein belongs to the TtcA family. Homodimer. The cofactor is Mg(2+). [4Fe-4S] cluster serves as cofactor.

Its subcellular location is the cytoplasm. The catalysed reaction is cytidine(32) in tRNA + S-sulfanyl-L-cysteinyl-[cysteine desulfurase] + AH2 + ATP = 2-thiocytidine(32) in tRNA + L-cysteinyl-[cysteine desulfurase] + A + AMP + diphosphate + H(+). It functions in the pathway tRNA modification. In terms of biological role, catalyzes the ATP-dependent 2-thiolation of cytidine in position 32 of tRNA, to form 2-thiocytidine (s(2)C32). The sulfur atoms are provided by the cysteine/cysteine desulfurase (IscS) system. This Paraburkholderia xenovorans (strain LB400) protein is tRNA-cytidine(32) 2-sulfurtransferase.